A 343-amino-acid chain; its full sequence is Ribosomal RNA small subunit methyltransferase C (343 aa).

Belongs to the methyltransferase superfamily. RsmC family. Monomer.

It is found in the cytoplasm. The catalysed reaction is guanosine(1207) in 16S rRNA + S-adenosyl-L-methionine = N(2)-methylguanosine(1207) in 16S rRNA + S-adenosyl-L-homocysteine + H(+). In terms of biological role, specifically methylates the guanine in position 1207 of 16S rRNA in the 30S particle. The protein is Ribosomal RNA small subunit methyltransferase C of Shigella flexneri.